The sequence spans 391 residues: Decapping nuclease RAI1 (391 aa).

Residue glutamate 174 participates in a divalent metal cation binding. Glutamate 223 lines the substrate pocket. A divalent metal cation-binding residues include aspartate 225, glutamate 244, and leucine 245. The substrate site is built by lysine 246 and glutamine 270.

This sequence belongs to the DXO/Dom3Z family. Interacts with RAT1; the interaction is direct, stabilizes RAT1 protein structure and stimulates its exoribonuclease activity. The interaction also stimulates RAI1 pyrophosphohydrolase activity, probably by recruiting it to mRNA substrates. A divalent metal cation serves as cofactor.

Its subcellular location is the nucleus. It carries out the reaction a 5'-end NAD(+)-phospho-ribonucleoside in mRNA + H2O = a 5'-end phospho-ribonucleoside in mRNA + NAD(+) + H(+). The enzyme catalyses a 5'-end (N(7)-methyl 5'-triphosphoguanosine)-ribonucleoside-ribonucleotide in mRNA + H2O = a (N(7)-methyl 5'-triphosphoguanosine)-nucleoside + a 5'-end phospho-ribonucleoside in mRNA + H(+). The catalysed reaction is a 5'-end triphospho-ribonucleoside in mRNA + H2O = a 5'-end phospho-ribonucleoside in mRNA + diphosphate + H(+). Its function is as follows. Decapping enzyme for NAD-capped RNAs: specifically hydrolyzes the nicotinamide adenine dinucleotide (NAD) cap from a subset of RNAs by removing the entire NAD moiety from the 5'-end of an NAD-capped RNA. The NAD-cap is present at the 5'-end of some RNAs and snoRNAs. In contrast to the canonical 5'-end N7 methylguanosine (m7G) cap, the NAD cap promotes mRNA decay. Also acts as a non-canonical decapping enzyme that removes the entire cap structure of m7G capped or incompletely capped RNAs. Has decapping activity toward incomplete 5'-end m7G cap mRNAs such as unmethylated 5'-end-capped RNA (cap0), while it has no activity toward 2'-O-ribose methylated m7G cap (cap1). Also possesses RNA 5'-pyrophosphohydrolase activity by hydrolyzing the 5'-end triphosphate to release pyrophosphates. Stimulates exoribonuclease activity of Rat1, allowing it to degrade RNAs with stable secondary structure more effectively. The sequence is that of Decapping nuclease RAI1 from Candida albicans (strain SC5314 / ATCC MYA-2876) (Yeast).